The sequence spans 290 residues: Phosphatidylglycerol--prolipoprotein diacylglyceryl transferase (290 aa).

7 helical membrane-spanning segments follow: residues 21 to 41, 60 to 80, 96 to 116, 124 to 144, 199 to 219, 226 to 246, and 260 to 280; these read VSLH…MWLA, LLYA…VLFY, WDGG…MLWF, FFQV…AGRL, SQLY…NVFI, GSVS…VECF, and ISMG…MMIW. R143 is a binding site for a 1,2-diacyl-sn-glycero-3-phospho-(1'-sn-glycerol).

The protein belongs to the Lgt family.

It localises to the cell inner membrane. The enzyme catalyses L-cysteinyl-[prolipoprotein] + a 1,2-diacyl-sn-glycero-3-phospho-(1'-sn-glycerol) = an S-1,2-diacyl-sn-glyceryl-L-cysteinyl-[prolipoprotein] + sn-glycerol 1-phosphate + H(+). It functions in the pathway protein modification; lipoprotein biosynthesis (diacylglyceryl transfer). Functionally, catalyzes the transfer of the diacylglyceryl group from phosphatidylglycerol to the sulfhydryl group of the N-terminal cysteine of a prolipoprotein, the first step in the formation of mature lipoproteins. The polypeptide is Phosphatidylglycerol--prolipoprotein diacylglyceryl transferase (Yersinia pseudotuberculosis serotype O:1b (strain IP 31758)).